The chain runs to 140 residues: Class I hydrophobin 1 (140 aa).

An N-terminal signal peptide occupies residues 1-18 (MKFAAVVVLAAAAAAVSA). A disordered region spans residues 22–60 (AQRMARGLPPKAPIRRHGTPADTEKRSHPSSTGGGQCNT). 4 disulfides stabilise this stretch: C58-C119, C65-C113, C66-C99, and C120-C133.

It belongs to the fungal hydrophobin family. In terms of assembly, self-assembles to form functional amyloid fibrils called rodlets. Self-assembly into fibrillar rodlets occurs spontaneously at hydrophobic:hydrophilic interfaces and the rodlets further associate laterally to form amphipathic monolayers.

It is found in the secreted. Its subcellular location is the cell wall. Functionally, aerial growth, conidiation, and dispersal of filamentous fungi in the environment rely upon a capability of their secreting small amphipathic proteins called hydrophobins (HPBs) with low sequence identity. Class I can self-assemble into an outermost layer of rodlet bundles on aerial cell surfaces, conferring cellular hydrophobicity that supports fungal growth, development and dispersal; whereas Class II form highly ordered films at water-air interfaces through intermolecular interactions but contribute nothing to the rodlet structure. The chain is Class I hydrophobin 1 from Pisolithus tinctorius (Dead man's foot).